Consider the following 417-residue polypeptide: Serine hydroxymethyltransferase (417 aa).

(6S)-5,6,7,8-tetrahydrofolate contacts are provided by residues leucine 121 and 125–127 (GHL). Lysine 229 bears the N6-(pyridoxal phosphate)lysine mark. 355-357 (SPF) provides a ligand contact to (6S)-5,6,7,8-tetrahydrofolate.

It belongs to the SHMT family. In terms of assembly, homodimer. Pyridoxal 5'-phosphate serves as cofactor.

The protein localises to the cytoplasm. It catalyses the reaction (6R)-5,10-methylene-5,6,7,8-tetrahydrofolate + glycine + H2O = (6S)-5,6,7,8-tetrahydrofolate + L-serine. The protein operates within one-carbon metabolism; tetrahydrofolate interconversion. Its pathway is amino-acid biosynthesis; glycine biosynthesis; glycine from L-serine: step 1/1. In terms of biological role, catalyzes the reversible interconversion of serine and glycine with tetrahydrofolate (THF) serving as the one-carbon carrier. This reaction serves as the major source of one-carbon groups required for the biosynthesis of purines, thymidylate, methionine, and other important biomolecules. Also exhibits THF-independent aldolase activity toward beta-hydroxyamino acids, producing glycine and aldehydes, via a retro-aldol mechanism. The sequence is that of Serine hydroxymethyltransferase from Xylella fastidiosa (strain M23).